The sequence spans 455 residues: Ribosomal protein uS12 methylthiotransferase RimO (455 aa).

Positions 10 to 120 (PKVGMVSLGC…VVEAVHDAAP (111 aa)) constitute an MTTase N-terminal domain. Residues Cys19, Cys55, Cys84, Cys151, Cys155, and Cys158 each coordinate [4Fe-4S] cluster. The Radical SAM core domain maps to 137–380 (LTPRHYSYLK…MAKTAAISAA (244 aa)). One can recognise a TRAM domain in the interval 383 to 455 (EAKIGRTLPV…DEHDLFGVVT (73 aa)).

This sequence belongs to the methylthiotransferase family. RimO subfamily. It depends on [4Fe-4S] cluster as a cofactor.

It is found in the cytoplasm. The enzyme catalyses L-aspartate(89)-[ribosomal protein uS12]-hydrogen + (sulfur carrier)-SH + AH2 + 2 S-adenosyl-L-methionine = 3-methylsulfanyl-L-aspartate(89)-[ribosomal protein uS12]-hydrogen + (sulfur carrier)-H + 5'-deoxyadenosine + L-methionine + A + S-adenosyl-L-homocysteine + 2 H(+). Functionally, catalyzes the methylthiolation of an aspartic acid residue of ribosomal protein uS12. This chain is Ribosomal protein uS12 methylthiotransferase RimO, found in Sphingopyxis alaskensis (strain DSM 13593 / LMG 18877 / RB2256) (Sphingomonas alaskensis).